Here is a 161-residue protein sequence, read N- to C-terminus: 18.5 kDa class I heat shock protein (161 aa).

The sHSP domain maps to 47 to 161; sequence ENSAFVSTRV…PDVKAIEISG (115 aa).

Belongs to the small heat shock protein (HSP20) family. As to quaternary structure, forms oligomeric structures.

It is found in the cytoplasm. This is 18.5 kDa class I heat shock protein (HSP18.5-C) from Glycine max (Soybean).